The primary structure comprises 308 residues: MKPKIFIDGEHGTTGLQIRALLAERGDLEIISIPTERRKETAARAEFLNAADIAILCLPDDAAKESVSLITNDTTKVIDASTAHRVAEGWAYGFAEMDKEQAKAIATAKRVANPGCWPQGPIATLRPLVTSGLLPADFPITVNGISGYSGGGRPMIEDYVAKGEDASEFLPYGLTLQHKHVPELRAYAKLSHDPIMQPAVGNFAQGMITVVPLQLGGLDSVPTGAELHAAIADHFAAIKGGVVEVAPYAHLERMPEIDPEIYNGTNRMKVYVFANDKRAQALLLAVYDNLGKGASGAAVQNMDLMLGL.

Residue Cys-116 is part of the active site.

This sequence belongs to the NAGSA dehydrogenase family. Type 2 subfamily.

It is found in the cytoplasm. It catalyses the reaction N-acetyl-L-glutamate 5-semialdehyde + phosphate + NADP(+) = N-acetyl-L-glutamyl 5-phosphate + NADPH + H(+). It participates in amino-acid biosynthesis; L-arginine biosynthesis; N(2)-acetyl-L-ornithine from L-glutamate: step 3/4. Catalyzes the NADPH-dependent reduction of N-acetyl-5-glutamyl phosphate to yield N-acetyl-L-glutamate 5-semialdehyde. In Mesorhizobium japonicum (strain LMG 29417 / CECT 9101 / MAFF 303099) (Mesorhizobium loti (strain MAFF 303099)), this protein is N-acetyl-gamma-glutamyl-phosphate reductase.